The sequence spans 366 residues: Aminomethyltransferase (366 aa).

The protein belongs to the GcvT family. In terms of assembly, the glycine cleavage system is composed of four proteins: P, T, L and H.

It carries out the reaction N(6)-[(R)-S(8)-aminomethyldihydrolipoyl]-L-lysyl-[protein] + (6S)-5,6,7,8-tetrahydrofolate = N(6)-[(R)-dihydrolipoyl]-L-lysyl-[protein] + (6R)-5,10-methylene-5,6,7,8-tetrahydrofolate + NH4(+). In terms of biological role, the glycine cleavage system catalyzes the degradation of glycine. This is Aminomethyltransferase from Sodalis glossinidius (strain morsitans).